The chain runs to 140 residues: Ergosterol biosynthetic protein 28 homolog (140 aa).

The next 4 membrane-spanning stretches (helical) occupy residues 4-24 (FLNV…GNTL), 52-72 (TFGI…IDIH), 79-99 (ITLW…FVFG), and 105-125 (VGVL…LVGL).

This sequence belongs to the ERG28 family.

The protein resides in the endoplasmic reticulum membrane. This is Ergosterol biosynthetic protein 28 homolog from Mus musculus (Mouse).